We begin with the raw amino-acid sequence, 431 residues long: MIARILAALADSMEMPVAAGGGSVLGTIKIAVMPIAKVFTMCFLGLLMASKYVNILPPSGRKLLNGLVFSLLLPCLIFSQLGQAVTLQKMLQWWFIPVNVVLGTISGSIIGFIVASIVRPPYPYFKFTIIQIGVGNIGNVPLVLLAALCRDTSNPFGDSEKCSIDGTAYISFGQWVGAIILYTYVYQMFAPPPEGFDAEEENLALKTLPVDAAPEQVPLLTQNFPKDFSPTQDLLPVQSTEPRGRGVSRKGKIAQIFVFLYEKLKLKQIVQPAIVASILAMILGAIPFTKKLIFTNGAPLFFFTDSCMILGDAMIPCILLALGGNLINGPGSSKLGFKTTAAIIIGRLVLVPPVGLGIVTVADKLGFLPADDKMFRFVLLLQHTMPTSVLSGAVANLRGCGRESAAVLFWVHIFAIFSMAGWMVLYINILF.

The Lumenal portion of the chain corresponds to 1-29 (MIARILAALADSMEMPVAAGGGSVLGTIK). Residues 30-50 (IAVMPIAKVFTMCFLGLLMAS) form a helical membrane-spanning segment. Residues 51-66 (KYVNILPPSGRKLLNG) lie on the Cytoplasmic side of the membrane. Residues 67–87 (LVFSLLLPCLIFSQLGQAVTL) form a helical membrane-spanning segment. Residues 88 to 93 (QKMLQW) are Lumenal-facing. A helical membrane pass occupies residues 94-114 (WFIPVNVVLGTISGSIIGFIV). Topologically, residues 115 to 128 (ASIVRPPYPYFKFT) are cytoplasmic. The chain crosses the membrane as a helical span at residues 129–149 (IIQIGVGNIGNVPLVLLAALC). Residues 150–169 (RDTSNPFGDSEKCSIDGTAY) are Lumenal-facing. The chain crosses the membrane as a helical span at residues 170–190 (ISFGQWVGAIILYTYVYQMFA). The Cytoplasmic portion of the chain corresponds to 191-268 (PPPEGFDAEE…FLYEKLKLKQ (78 aa)). A helical transmembrane segment spans residues 269–289 (IVQPAIVASILAMILGAIPFT). The Lumenal portion of the chain corresponds to 290-306 (KKLIFTNGAPLFFFTDS). Residues 307-327 (CMILGDAMIPCILLALGGNLI) form a helical membrane-spanning segment. At 328 to 340 (NGPGSSKLGFKTT) the chain is on the cytoplasmic side. The helical transmembrane segment at 341–361 (AAIIIGRLVLVPPVGLGIVTV) threads the bilayer. Over 362–376 (ADKLGFLPADDKMFR) the chain is Lumenal. Residues 377–397 (FVLLLQHTMPTSVLSGAVANL) traverse the membrane as a helical segment. Topologically, residues 398–406 (RGCGRESAA) are cytoplasmic. A helical membrane pass occupies residues 407–427 (VLFWVHIFAIFSMAGWMVLYI). Residues 428–431 (NILF) lie on the Lumenal side of the membrane.

The protein belongs to the auxin efflux carrier (TC 2.A.69.2) family. Expressed in seedlings, rosette and cauline leaves, stems and flowers.

The protein localises to the endoplasmic reticulum membrane. In terms of biological role, involved in cellular auxin homeostasis by regulating auxin metabolism. Regulates intracellular auxin accumulation at the endoplasmic reticulum and thus auxin availability for nuclear auxin signaling. In Arabidopsis thaliana (Mouse-ear cress), this protein is Protein PIN-LIKES 6.